Here is a 609-residue protein sequence, read N- to C-terminus: UvrABC system protein C (609 aa).

Residues 15–93 enclose the GIY-YIG domain; the sequence is SSAGVYRMYD…IKQYMPKYNV (79 aa). A UVR domain is found at 202-237; it reads QQVVTNLVTKMEQAAEEFHYEQAAAYRDQITALRKV.

It belongs to the UvrC family. As to quaternary structure, interacts with UvrB in an incision complex.

It is found in the cytoplasm. In terms of biological role, the UvrABC repair system catalyzes the recognition and processing of DNA lesions. UvrC both incises the 5' and 3' sides of the lesion. The N-terminal half is responsible for the 3' incision and the C-terminal half is responsible for the 5' incision. In Shewanella denitrificans (strain OS217 / ATCC BAA-1090 / DSM 15013), this protein is UvrABC system protein C.